The primary structure comprises 275 residues: 3-methyl-2-oxobutanoate hydroxymethyltransferase (275 aa).

Residues aspartate 44 and aspartate 83 each contribute to the Mg(2+) site. 3-methyl-2-oxobutanoate is bound by residues 44 to 45, aspartate 83, and lysine 113; that span reads DS. Glutamate 115 lines the Mg(2+) pocket. Glutamate 182 serves as the catalytic Proton acceptor.

It belongs to the PanB family. As to quaternary structure, homodecamer; pentamer of dimers. The cofactor is Mg(2+).

Its subcellular location is the cytoplasm. It carries out the reaction 3-methyl-2-oxobutanoate + (6R)-5,10-methylene-5,6,7,8-tetrahydrofolate + H2O = 2-dehydropantoate + (6S)-5,6,7,8-tetrahydrofolate. It functions in the pathway cofactor biosynthesis; (R)-pantothenate biosynthesis; (R)-pantoate from 3-methyl-2-oxobutanoate: step 1/2. In terms of biological role, catalyzes the reversible reaction in which hydroxymethyl group from 5,10-methylenetetrahydrofolate is transferred onto alpha-ketoisovalerate to form ketopantoate. This chain is 3-methyl-2-oxobutanoate hydroxymethyltransferase, found in Clostridioides difficile (strain 630) (Peptoclostridium difficile).